Reading from the N-terminus, the 509-residue chain is DEAD-box ATP-dependent RNA helicase CshA (509 aa).

Residues 2–30 carry the Q motif motif; it reads QNFKELGISDKTVQTLEAMGFKEPTPIQK. Residues 33 to 203 enclose the Helicase ATP-binding domain; the sequence is IPYALEGDDI…QQFMKAPKII (171 aa). 46–53 serves as a coordination point for ATP; that stretch reads AQTGTGKT. Positions 150 to 153 match the DEAD box motif; the sequence is DEAD. Residues 214–375 form the Helicase C-terminal domain; that stretch reads QIDEYYTIVK…LRPPHRKEVL (162 aa). Composition is skewed to basic residues over residues 440 to 459 and 467 to 482; these read ARKN…KRGN and RRSK…KKNQ. Residues 440–509 are disordered; the sequence is ARKNRSSKGG…KGRTFADHQK (70 aa). Positions 483–492 are enriched in basic and acidic residues; that stretch reads KKFDRRDKQQ.

Belongs to the DEAD box helicase family. CshA subfamily. Oligomerizes, may be a member of the RNA degradosome.

Its subcellular location is the cytoplasm. The catalysed reaction is ATP + H2O = ADP + phosphate + H(+). DEAD-box RNA helicase possibly involved in RNA degradation. Unwinds dsRNA in both 5'- and 3'-directions, has RNA-dependent ATPase activity. The protein is DEAD-box ATP-dependent RNA helicase CshA of Staphylococcus epidermidis (strain ATCC 35984 / DSM 28319 / BCRC 17069 / CCUG 31568 / BM 3577 / RP62A).